A 414-amino-acid polypeptide reads, in one-letter code: Tryptophan synthase beta chain (414 aa).

At lysine 109 the chain carries N6-(pyridoxal phosphate)lysine.

The protein belongs to the TrpB family. As to quaternary structure, tetramer of two alpha and two beta chains. The cofactor is pyridoxal 5'-phosphate.

It catalyses the reaction (1S,2R)-1-C-(indol-3-yl)glycerol 3-phosphate + L-serine = D-glyceraldehyde 3-phosphate + L-tryptophan + H2O. The protein operates within amino-acid biosynthesis; L-tryptophan biosynthesis; L-tryptophan from chorismate: step 5/5. The beta subunit is responsible for the synthesis of L-tryptophan from indole and L-serine. This Prochlorococcus marinus (strain AS9601) protein is Tryptophan synthase beta chain.